Reading from the N-terminus, the 220-residue chain is Putative respiratory nitrate reductase subunit Rieske (220 aa).

A Rieske domain is found at 118–206 (KAPTLLVRHA…ITVSSEGYLI (89 aa)). [2Fe-2S] cluster is bound by residues cysteine 151, histidine 153, cysteine 168, and histidine 171. Cysteine 156 and cysteine 170 are joined by a disulfide.

Probable multiprotein complex; a catalytic heterodimer of an alpha and beta chain is proposed to associate with additional subunits involved in membrane attachment and electron transfer. [2Fe-2S] cluster serves as cofactor.

The protein localises to the cell membrane. The respiratory membrane-bound nitrate reductase enzyme complex plays a role in generation of metabolic energy by using nitrate as a terminal electron acceptor during anaerobic conditions. Proposed Rieske subunit involved in a protonmotive Q-cycle mechanism-based electron transfer electrons to the beta subunit. The chain is Putative respiratory nitrate reductase subunit Rieske (narB) from Haloferax mediterranei (strain ATCC 33500 / DSM 1411 / JCM 8866 / NBRC 14739 / NCIMB 2177 / R-4) (Halobacterium mediterranei).